A 286-amino-acid polypeptide reads, in one-letter code: 2-oxoglutarate synthase subunit KorB (286 aa).

As to quaternary structure, heterotetramer of the KorA, KorB, KorC and KorD subunits.

It carries out the reaction 2 oxidized [2Fe-2S]-[ferredoxin] + 2-oxoglutarate + CoA = succinyl-CoA + 2 reduced [2Fe-2S]-[ferredoxin] + CO2 + H(+). The protein is 2-oxoglutarate synthase subunit KorB (korB) of Methanothermobacter thermautotrophicus (strain ATCC 29096 / DSM 1053 / JCM 10044 / NBRC 100330 / Delta H) (Methanobacterium thermoautotrophicum).